The sequence spans 132 residues: Cytochrome c-554 (132 aa).

An N-terminal signal peptide occupies residues 1-24 (MKSISMLTLAASVAFAVTAGQAVA). In terms of domain architecture, Cytochrome c spans 26–126 (GDPAAGEKVF…NVWAYLSQFG (101 aa)). Positions 38, 41, 42, and 104 each coordinate heme c.

Post-translationally, binds 1 heme c group covalently per subunit.

The protein resides in the periplasm. The polypeptide is Cytochrome c-554 (Methylosinus trichosporium).